A 386-amino-acid polypeptide reads, in one-letter code: Succinate--CoA ligase [ADP-forming] subunit beta (386 aa).

Residues 9–244 form the ATP-grasp domain; that stretch reads KEILRNFGVP…LDEEDPAEVE (236 aa). ATP contacts are provided by residues lysine 46, 53-55, glutamate 99, alanine 102, and glutamate 107; that span reads GRG. Asparagine 199 and aspartate 213 together coordinate Mg(2+). Substrate is bound by residues asparagine 264 and 321–323; that span reads GIM.

This sequence belongs to the succinate/malate CoA ligase beta subunit family. Heterotetramer of two alpha and two beta subunits. Mg(2+) is required as a cofactor.

It catalyses the reaction succinate + ATP + CoA = succinyl-CoA + ADP + phosphate. The catalysed reaction is GTP + succinate + CoA = succinyl-CoA + GDP + phosphate. It participates in carbohydrate metabolism; tricarboxylic acid cycle; succinate from succinyl-CoA (ligase route): step 1/1. Functionally, succinyl-CoA synthetase functions in the citric acid cycle (TCA), coupling the hydrolysis of succinyl-CoA to the synthesis of either ATP or GTP and thus represents the only step of substrate-level phosphorylation in the TCA. The beta subunit provides nucleotide specificity of the enzyme and binds the substrate succinate, while the binding sites for coenzyme A and phosphate are found in the alpha subunit. The polypeptide is Succinate--CoA ligase [ADP-forming] subunit beta (Polaromonas naphthalenivorans (strain CJ2)).